We begin with the raw amino-acid sequence, 60 residues long: Small ribosomal subunit protein eS31 (60 aa).

Zn(2+) contacts are provided by Cys24, Cys27, Cys42, and Cys45. The segment at 24-45 (CPRCGPGVFMADHGNRYACGRC) adopts a C4-type zinc-finger fold.

This sequence belongs to the eukaryotic ribosomal protein eS31 family. As to quaternary structure, part of the 30S ribosomal subunit. Zn(2+) is required as a cofactor.

This Methanopyrus kandleri (strain AV19 / DSM 6324 / JCM 9639 / NBRC 100938) protein is Small ribosomal subunit protein eS31.